The following is a 5058-amino-acid chain: ATP-binding cassette sub-family A member 13 (5058 aa).

7 consecutive transmembrane segments (helical) span residues 23 to 43 (PVLF…LTVL), 3568 to 3588 (VGFF…ASMV), 3607 to 3627 (GVHP…VLTI), 3648 to 3668 (FIVF…SYLL), 3679 to 3699 (ALCT…LLVL), 3709 to 3729 (TFLC…ITFL), and 3752 to 3772 (FGWV…CGWY). Positions 3842–4074 (VTLVSVTKEY…YGQGLRLTLT (233 aa)) constitute an ABC transporter 1 domain. Residue 3875–3882 (GTNGAGKT) participates in ATP binding. The next 7 membrane-spanning stretches (helical) occupy residues 4226 to 4246 (TLAD…LFMV), 4458 to 4478 (VALC…SSVV), 4504 to 4524 (FLYD…VIVA), 4536 to 4556 (LAAT…WMYL), 4568 to 4588 (FISY…ITIM), 4607 to 4627 (VLKW…LVEL), and 4651 to 4671 (MNFL…LLLL). Residues 4718–4956 (LVLYNLSKHY…FGDGYTVKVW (239 aa)) enclose the ABC transporter 2 domain. Residue 4754-4761 (GVNGAGKS) coordinates ATP.

The protein belongs to the ABC transporter superfamily. Significantly expressed in the bone marrow, trachea, testis, thyroid and lung as well as in skin fibroblasts.

It localises to the cytoplasmic vesicle membrane. It catalyses the reaction cholesterol(in) + ATP + H2O = cholesterol(out) + ADP + phosphate + H(+). In terms of biological role, may mediate the cholesterol and gangliosides transport from the plasma membrane to intracellular vesicles in an ATP hydrolysis dependent manner, thus playing a role in their internalization by endocytic retrograde transport and may also participate in the endocytosis of synaptic vesicle in cortical neurons. This Homo sapiens (Human) protein is ATP-binding cassette sub-family A member 13.